The chain runs to 392 residues: Large ribosomal subunit protein uL3 (392 aa).

It belongs to the universal ribosomal protein uL3 family. Component of the large ribosomal subunit (LSU). Mature N.crassa ribosomes consist of a small (40S) and a large (60S) subunit. The 40S small subunit contains 1 molecule of ribosomal RNA (18S rRNA) and at least 32 different proteins. The large 60S subunit contains 3 rRNA molecules (26S, 5.8S and 5S rRNA) and at least 42 different proteins.

The protein resides in the cytoplasm. Component of the ribosome, a large ribonucleoprotein complex responsible for the synthesis of proteins in the cell. The small ribosomal subunit (SSU) binds messenger RNAs (mRNAs) and translates the encoded message by selecting cognate aminoacyl-transfer RNA (tRNA) molecules. The large subunit (LSU) contains the ribosomal catalytic site termed the peptidyl transferase center (PTC), which catalyzes the formation of peptide bonds, thereby polymerizing the amino acids delivered by tRNAs into a polypeptide chain. The nascent polypeptides leave the ribosome through a tunnel in the LSU and interact with protein factors that function in enzymatic processing, targeting, and the membrane insertion of nascent chains at the exit of the ribosomal tunnel. This chain is Large ribosomal subunit protein uL3 (rpl-3), found in Neurospora crassa (strain ATCC 24698 / 74-OR23-1A / CBS 708.71 / DSM 1257 / FGSC 987).